Here is a 353-residue protein sequence, read N- to C-terminus: Photosystem II D2 protein (353 aa).

Threonine 2 carries the post-translational modification N-acetylthreonine. Threonine 2 carries the phosphothreonine modification. Residues 41-61 (CAYFALGGWFTGTTFVTSWYT) form a helical membrane-spanning segment. Position 118 (histidine 118) interacts with chlorophyll a. Residues 125 to 141 (GFMLRQFELSRSVQLRP) traverse the membrane as a helical segment. Pheophytin a is bound by residues glutamine 130 and asparagine 143. The chain crosses the membrane as a helical span at residues 153–166 (VFVSVFLIYPLGQS). Histidine 198 is a chlorophyll a binding site. Residues 208 to 228 (AALLCAIHGATVENTLFEDGD) form a helical membrane-spanning segment. Residues histidine 215 and phenylalanine 262 each coordinate a plastoquinone. Histidine 215 contributes to the Fe cation binding site. Histidine 269 contacts Fe cation. Residues 279–295 (GLWMSALGVVGLALNLR) traverse the membrane as a helical segment.

This sequence belongs to the reaction center PufL/M/PsbA/D family. In terms of assembly, PSII is composed of 1 copy each of membrane proteins PsbA, PsbB, PsbC, PsbD, PsbE, PsbF, PsbH, PsbI, PsbJ, PsbK, PsbL, PsbM, PsbT, PsbX, PsbY, PsbZ, Psb30/Ycf12, at least 3 peripheral proteins of the oxygen-evolving complex and a large number of cofactors. It forms dimeric complexes. The D1/D2 heterodimer binds P680, chlorophylls that are the primary electron donor of PSII, and subsequent electron acceptors. It shares a non-heme iron and each subunit binds pheophytin, quinone, additional chlorophylls, carotenoids and lipids. There is also a Cl(-1) ion associated with D1 and D2, which is required for oxygen evolution. The PSII complex binds additional chlorophylls, carotenoids and specific lipids. is required as a cofactor.

The protein resides in the plastid. Its subcellular location is the chloroplast thylakoid membrane. The catalysed reaction is 2 a plastoquinone + 4 hnu + 2 H2O = 2 a plastoquinol + O2. Its function is as follows. Photosystem II (PSII) is a light-driven water:plastoquinone oxidoreductase that uses light energy to abstract electrons from H(2)O, generating O(2) and a proton gradient subsequently used for ATP formation. It consists of a core antenna complex that captures photons, and an electron transfer chain that converts photonic excitation into a charge separation. The D1/D2 (PsbA/PsbD) reaction center heterodimer binds P680, the primary electron donor of PSII as well as several subsequent electron acceptors. D2 is needed for assembly of a stable PSII complex. The sequence is that of Photosystem II D2 protein from Arabis hirsuta (Hairy rock-cress).